A 211-amino-acid polypeptide reads, in one-letter code: Ribonuclease HII (211 aa).

The RNase H type-2 domain occupies 2-211 (MLILGVDEAG…TAQRLKASSV (210 aa)). Residues aspartate 8, glutamate 9, and aspartate 106 each coordinate a divalent metal cation.

It belongs to the RNase HII family. Mn(2+) serves as cofactor. Mg(2+) is required as a cofactor.

The protein resides in the cytoplasm. The catalysed reaction is Endonucleolytic cleavage to 5'-phosphomonoester.. In terms of biological role, endonuclease that specifically degrades the RNA of RNA-DNA hybrids. This Methanothrix thermoacetophila (strain DSM 6194 / JCM 14653 / NBRC 101360 / PT) (Methanosaeta thermophila) protein is Ribonuclease HII.